The chain runs to 836 residues: Periostin (836 aa).

Positions 1 to 21 (MIPFLPMFSLLLLLIVNPINA) are cleaved as a signal peptide. In terms of domain architecture, EMI spans 40–94 (GPNVCALQQILGTKKKYFSTCKNWYKKSICGQKTTVLYECCPGYMRMEGMKGCPA). Disulfide bonds link C44–C80, C69–C333, C79–C92, C208–C311, and C467–C472. C60 bears the S-cysteinyl cysteine mark. 4 consecutive FAS1 domains span residues 97–230 (PIDH…DRVL), 234–365 (GTSI…DQVL), 368–492 (DSAK…REII), and 496–628 (EKSL…DKLL). N599 carries N-linked (GlcNAc...) asparagine glycosylation.

As to quaternary structure, homodimer. Interacts with BMP1 and fibronectin. In terms of processing, gamma-carboxylation is controversial. Gamma-carboxyglutamated; gamma-carboxyglutamate residues are formed by vitamin K dependent carboxylation; this may be required for calcium binding. According to a more recent report, does not contain vitamin K-dependent gamma-carboxyglutamate residues. In terms of tissue distribution, widely expressed with highest levels in aorta, stomach, lower gastrointestinal tract, placenta, uterus, thyroid tissue and breast. Expressed in the kidney. Expressed in the lung. Up-regulated in epithelial ovarian tumors. Not expressed in normal ovaries. Also highly expressed at the tumor periphery of lung carcinoma tissue but not within the tumor. Overexpressed in breast cancers.

It localises to the golgi apparatus. The protein localises to the secreted. Its subcellular location is the extracellular space. The protein resides in the extracellular matrix. Its function is as follows. Induces cell attachment and spreading and plays a role in cell adhesion. Enhances incorporation of BMP1 in the fibronectin matrix of connective tissues, and subsequent proteolytic activation of lysyl oxidase LOX. The polypeptide is Periostin (POSTN) (Homo sapiens (Human)).